A 267-amino-acid polypeptide reads, in one-letter code: Rhomboid-type serine protease 2 (267 aa).

6 consecutive transmembrane segments (helical) span residues 20 to 40, 67 to 87, 99 to 119, 126 to 146, 155 to 179, and 185 to 206; these read LPLFTRLIVLAIIALSIASLQ, FPLIHLNVIHAILNLLALTPL, TSLALFFGPLTSIPAVAYVLI, ANHGVLGASMWVFTLLAMESI, FVIGSVNIPTWTTPLIMSLVVAALI, and LGHLCGIAIGYVAGFGYAKLLA. The active-site Nucleophile is the Ser134. His187 is an active-site residue. The segment at 247–267 is disordered; sequence RPGPSGSAATELVGTTQRLGP.

The protein belongs to the peptidase S54 family.

Its subcellular location is the golgi apparatus membrane. The protein localises to the golgi apparatus. It is found in the cis-Golgi network membrane. It carries out the reaction Cleaves type-1 transmembrane domains using a catalytic dyad composed of serine and histidine that are contributed by different transmembrane domains.. Its function is as follows. Probable rhomboid-type serine protease that catalyzes intramembrane proteolysis. This is Rhomboid-type serine protease 2 (RBD2) from Gibberella zeae (strain ATCC MYA-4620 / CBS 123657 / FGSC 9075 / NRRL 31084 / PH-1) (Wheat head blight fungus).